The following is a 244-amino-acid chain: MRNIKLIIEYDGTAYCGWQLQPNGITIQQVIEESLEKMLGQSVRLQSSGRTDAGVHALGMVAVFKTQKDLPVRAFSDGLNCLLPPDIAIRDASEVPLSFNPRADAISKHYRYTIYNSKRRSPLTRLNSWHLRGILNMELMQLGASHFVGEHDFAAFRASNCVAKTTIRRMFHVSVAKVGDSVIIDVHGSGFLKNMVRVIAGTLVAVGQGKLDPSAIPGLLAGGDRSASGITAPPQGLCLMEVFY.

The active-site Nucleophile is the Asp52. Tyr110 lines the substrate pocket.

Belongs to the tRNA pseudouridine synthase TruA family. In terms of assembly, homodimer.

The catalysed reaction is uridine(38/39/40) in tRNA = pseudouridine(38/39/40) in tRNA. Functionally, formation of pseudouridine at positions 38, 39 and 40 in the anticodon stem and loop of transfer RNAs. The sequence is that of tRNA pseudouridine synthase A from Geotalea daltonii (strain DSM 22248 / JCM 15807 / FRC-32) (Geobacter daltonii).